The following is a 239-amino-acid chain: Sugar fermentation stimulation protein homolog (239 aa).

The protein belongs to the SfsA family.

This is Sugar fermentation stimulation protein homolog from Alcanivorax borkumensis (strain ATCC 700651 / DSM 11573 / NCIMB 13689 / SK2).